A 90-amino-acid polypeptide reads, in one-letter code: MANIKSKIKSITKMQKARAKNNAIKSRVKTAIKKAKIAISTDASNKSDLIAKAHSEISKAKSKGVFHKNKANRKISRLNLFANTYTTPAQ.

Belongs to the bacterial ribosomal protein bS20 family.

In terms of biological role, binds directly to 16S ribosomal RNA. The protein is Small ribosomal subunit protein bS20 of Mesomycoplasma hyopneumoniae (strain J / ATCC 25934 / NCTC 10110) (Mycoplasma hyopneumoniae).